A 187-amino-acid chain; its full sequence is Biogenesis of lysosome-related organelles complex 1 subunit 5 (187 aa).

Residues 1–26 form a disordered region; sequence MSGGGTETPVGCEAAPGGGSKKRDSL. N-acetylserine is present on Ser-2. Residues 154–186 are a coiled coil; the sequence is NKRAEVDEEHRKAMERLKEQYAEMEKDLAKFST.

Belongs to the BLOC1S5 family. As to quaternary structure, interacts with BLOC1S4, DTNBP1/BLOC1S7 and PI4K2A. Component of the biogenesis of lysosome-related organelles complex 1 (BLOC-1) composed of BLOC1S1, BLOC1S2, BLOC1S3, BLOC1S4, BLOC1S5, BLOC1S6, DTNBP1/BLOC1S7 and SNAPIN/BLOC1S8. Octamer composed of one copy each BLOC1S1, BLOC1S2, BLOC1S3, BLOC1S4, BLOC1S5, BLOC1S6, DTNBP1/BLOC1S7 and SNAPIN/BLOC1S8. The BLOC-1 complex associates with the AP-3 protein complex and membrane protein cargos. Interacts with BLOC1S6.

In terms of biological role, component of the BLOC-1 complex, a complex that is required for normal biogenesis of lysosome-related organelles (LRO), such as platelet dense granules and melanosomes. In concert with the AP-3 complex, the BLOC-1 complex is required to target membrane protein cargos into vesicles assembled at cell bodies for delivery into neurites and nerve terminals. The BLOC-1 complex, in association with SNARE proteins, is also proposed to be involved in neurite extension. Plays a role in intracellular vesicle trafficking. This chain is Biogenesis of lysosome-related organelles complex 1 subunit 5, found in Homo sapiens (Human).